The sequence spans 392 residues: Formate-dependent phosphoribosylglycinamide formyltransferase (392 aa).

N(1)-(5-phospho-beta-D-ribosyl)glycinamide-binding positions include 22 to 23 and E82; that span reads EL. ATP-binding positions include R114, K155, 160–165, 195–198, and E203; these read SSGKGQ and EGVV. An ATP-grasp domain is found at 119-308; sequence RLAAEELGLP…EFALHVRAFL (190 aa). E267 and E279 together coordinate Mg(2+). N(1)-(5-phospho-beta-D-ribosyl)glycinamide contacts are provided by residues D286, K355, and 362-363; that span reads RR.

This sequence belongs to the PurK/PurT family. In terms of assembly, homodimer.

It catalyses the reaction N(1)-(5-phospho-beta-D-ribosyl)glycinamide + formate + ATP = N(2)-formyl-N(1)-(5-phospho-beta-D-ribosyl)glycinamide + ADP + phosphate + H(+). The protein operates within purine metabolism; IMP biosynthesis via de novo pathway; N(2)-formyl-N(1)-(5-phospho-D-ribosyl)glycinamide from N(1)-(5-phospho-D-ribosyl)glycinamide (formate route): step 1/1. Its function is as follows. Involved in the de novo purine biosynthesis. Catalyzes the transfer of formate to 5-phospho-ribosyl-glycinamide (GAR), producing 5-phospho-ribosyl-N-formylglycinamide (FGAR). Formate is provided by PurU via hydrolysis of 10-formyl-tetrahydrofolate. The sequence is that of Formate-dependent phosphoribosylglycinamide formyltransferase from Salmonella paratyphi B (strain ATCC BAA-1250 / SPB7).